Here is a 373-residue protein sequence, read N- to C-terminus: Tryptophan--tRNA ligase (373 aa).

Residues 79 to 87 (PSGKFHFGH) carry the 'HIGH' region motif. The 'KMSKS' region signature appears at 257–261 (KMSSS).

The protein belongs to the class-I aminoacyl-tRNA synthetase family.

The protein localises to the cytoplasm. It carries out the reaction tRNA(Trp) + L-tryptophan + ATP = L-tryptophyl-tRNA(Trp) + AMP + diphosphate + H(+). In Hyperthermus butylicus (strain DSM 5456 / JCM 9403 / PLM1-5), this protein is Tryptophan--tRNA ligase.